Consider the following 814-residue polypeptide: MDAAFLLVLGLLAQSLCLSLGVPGWRRPTTLYPWRRAPALSRVRRAWVIPPISVSENHKRLPYPLVQIKSDKQQLGSVIYSIQGPGVDEEPRGVFSIDKFTGKVFLNAMLDREKTDRFRLRAFALDLGGSTLEDPTDLEIVVVDQNDNRPAFLQEAFTGRVLEGAVPGTYVTRAEATDADDPETDNAALRFSILQQGSPELFSIDELTGEIRTVQVGLDREVVAVYNLTLQVADMSGDGLTATASAIITLDDINDNAPEFTRDEFFMEAIEAVSGVDVGRLEVEDRDLPGSPNWVARFTILEGDPDGQFTIRTDPKTNEGVLSIVKALDYESCEHYELKVSVQNEAPLQAAALRAERGQAKVRVHVQDTNEPPVFQENPLRTSLAEGAPPGTLVATFSARDPDTEQLQRLSYSKDYDPEDWLQVDAATGRIQTQHVLSPASPFLKGGWYRAIVLAQDDASQPRTATGTLSIEILEVNDHAPVLAPPPPGSLCSEPHQGPGLLLGATDEDLPPHGAPFHFQLSPRLPELGRNWSLSQVNVSHARLRPRHQVPEGLHRLSLLLRDSGQPPQQREQPLNVTVCRCGKDGVCLPGAAALLAGGTGLSLGALVIVLASALLLLVLVLLVALRARFWKQSRGKGLLHGPQDDLRDNVLNYDEQGGGEEDQDAYDISQLRHPTALSLPLGPPPLRRDAPQGRLHPQPPRVLPTSPLDIADFINDGLEAADSDPSVPPYDTALIYDYEGDGSVAGTLSSILSSQGDEDQDYDYLRDWGPRFARLADMYGHPCGLEYGARWDHQAREGLSPGALLPRHRGRTA.

Residues 1–21 (MDAAFLLVLGLLAQSLCLSLG) form the signal peptide. Residues 22–60 (VPGWRRPTTLYPWRRAPALSRVRRAWVIPPISVSENHKR) constitute a propeptide that is removed on maturation. Cadherin domains are found at residues 61-152 (LPYP…RPAF), 153-260 (LQEA…APEF), 261-375 (TRDE…PPVF), 376-481 (QENP…DHAP), and 482-590 (VLAP…VCLP). Residues 61-606 (LPYPLVQIKS…AGGTGLSLGA (546 aa)) are Extracellular-facing. Residue Asn-227 is glycosylated (N-linked (GlcNAc...) asparagine). Asn-531, Asn-538, and Asn-576 each carry an N-linked (GlcNAc...) asparagine glycan. The chain crosses the membrane as a helical span at residues 607–626 (LVIVLASALLLLVLVLLVAL). Topologically, residues 627-814 (RARFWKQSRG…LLPRHRGRTA (188 aa)) are cytoplasmic. Disordered regions lie at residues 636–663 (GKGLLHGPQDDLRDNVLNYDEQGGGEED) and 676–703 (TALSLPLGPPPLRRDAPQGRLHPQPPRV).

In terms of tissue distribution, expressed in the brain and cerebellum.

The protein localises to the cell membrane. Cadherins are calcium-dependent cell adhesion proteins. They preferentially interact with themselves in a homophilic manner in connecting cells; cadherins may thus contribute to the sorting of heterogeneous cell types. M-cadherin is part of the myogenic program and may provide a trigger for terminal muscle differentiation. This chain is Cadherin-15 (CDH15), found in Homo sapiens (Human).